Here is a 521-residue protein sequence, read N- to C-terminus: Probable cytochrome P450 12d1 proximal, mitochondrial (521 aa).

The N-terminal 19 residues, 1-19, are a transit peptide targeting the mitochondrion; sequence MNTLSSARSVAIYVGPVRS. Cys-467 contacts heme.

This sequence belongs to the cytochrome P450 family. Heme serves as cofactor.

The protein resides in the mitochondrion membrane. This Drosophila melanogaster (Fruit fly) protein is Probable cytochrome P450 12d1 proximal, mitochondrial (Cyp12d1-p).